Here is a 335-residue protein sequence, read N- to C-terminus: UPF0353 protein MAP_1207 (335 aa).

The next 2 membrane-spanning stretches (helical) occupy residues 18-38 and 67-87; these read WFFL…LMQL and LPAI…AGPT. One can recognise a VWFA domain in the interval 98–294; that stretch reads VVMLVIDVSQ…QELKSVYATL (197 aa). Residues 309-329 traverse the membrane as a helical segment; sequence VGWVRLGALVLALAALTALLI.

The protein belongs to the UPF0353 family.

The protein resides in the cell membrane. This is UPF0353 protein MAP_1207 from Mycolicibacterium paratuberculosis (strain ATCC BAA-968 / K-10) (Mycobacterium paratuberculosis).